Reading from the N-terminus, the 243-residue chain is Orotidine 5'-phosphate decarboxylase (243 aa).

Substrate contacts are provided by residues D18, K39, 66–75, T130, R192, Q201, G221, and R222; that span reads DLKFHDIPAT. The Proton donor role is filled by K68.

It belongs to the OMP decarboxylase family. Type 1 subfamily. As to quaternary structure, homodimer.

It carries out the reaction orotidine 5'-phosphate + H(+) = UMP + CO2. It participates in pyrimidine metabolism; UMP biosynthesis via de novo pathway; UMP from orotate: step 2/2. Catalyzes the decarboxylation of orotidine 5'-monophosphate (OMP) to uridine 5'-monophosphate (UMP). In Synechococcus sp. (strain WH7803), this protein is Orotidine 5'-phosphate decarboxylase.